A 210-amino-acid chain; its full sequence is Orotate phosphoribosyltransferase (210 aa).

5-phospho-alpha-D-ribose 1-diphosphate-binding positions include Arg-96, Lys-100, His-102, and 122–130; that span reads DDLISTGGS. Ser-126 lines the orotate pocket.

Belongs to the purine/pyrimidine phosphoribosyltransferase family. PyrE subfamily. Homodimer. The cofactor is Mg(2+).

It carries out the reaction orotidine 5'-phosphate + diphosphate = orotate + 5-phospho-alpha-D-ribose 1-diphosphate. It participates in pyrimidine metabolism; UMP biosynthesis via de novo pathway; UMP from orotate: step 1/2. Catalyzes the transfer of a ribosyl phosphate group from 5-phosphoribose 1-diphosphate to orotate, leading to the formation of orotidine monophosphate (OMP). The chain is Orotate phosphoribosyltransferase from Levilactobacillus brevis (strain ATCC 367 / BCRC 12310 / CIP 105137 / JCM 1170 / LMG 11437 / NCIMB 947 / NCTC 947) (Lactobacillus brevis).